Here is a 142-residue protein sequence, read N- to C-terminus: Large ribosomal subunit protein uL13 (142 aa).

Belongs to the universal ribosomal protein uL13 family. As to quaternary structure, part of the 50S ribosomal subunit.

Functionally, this protein is one of the early assembly proteins of the 50S ribosomal subunit, although it is not seen to bind rRNA by itself. It is important during the early stages of 50S assembly. This chain is Large ribosomal subunit protein uL13, found in Sodalis glossinidius (strain morsitans).